The sequence spans 254 residues: 3-dehydroquinate dehydratase (254 aa).

Residues 47–49 (EFR) and R83 contribute to the 3-dehydroquinate site. H144 (proton donor/acceptor) is an active-site residue. K171 functions as the Schiff-base intermediate with substrate in the catalytic mechanism. Residues R213, S232, and Q236 each coordinate 3-dehydroquinate.

It belongs to the type-I 3-dehydroquinase family. In terms of assembly, homodimer.

The enzyme catalyses 3-dehydroquinate = 3-dehydroshikimate + H2O. The protein operates within metabolic intermediate biosynthesis; chorismate biosynthesis; chorismate from D-erythrose 4-phosphate and phosphoenolpyruvate: step 3/7. In terms of biological role, involved in the third step of the chorismate pathway, which leads to the biosynthesis of aromatic amino acids. Catalyzes the cis-dehydration of 3-dehydroquinate (DHQ) and introduces the first double bond of the aromatic ring to yield 3-dehydroshikimate. This is 3-dehydroquinate dehydratase from Neisseria meningitidis serogroup A / serotype 4A (strain DSM 15465 / Z2491).